The following is a 723-amino-acid chain: MSKMRVYEYAKKHNVSSKDVIHKLKEMNIDVSNHMTMIEADVVEQLDRSFSKEQKQELKKEEKKAPVKTPVLEQFEEDEDEVIQTKVPIKKAVVKNREGKKHDLQIQQKEKKIFNNKKNKKQKPQQAPQQEVQKKKEKELPKKITFEGSLTVAELAKKLGKEPSEIIKKLFMLGIIATINKDLDKDAIELICSDYGVEVEEKVTIDETEFETIEIVDNPEDLVERPPVVTIMGHVDHGKTTLLDSIRQTKVTEQEAGGITQHIGAYQVVVNGKKITFLDTPGHEAFTTMRARGAQVTDIVILVVAADDGVMPQTVEAINHAKAAKVPIIVAVNKIDKPTANPDRVMQELMEYELVPEEWGGDTIYCKLSALTGEGIDNLLEMILLVSEMEELKANPNRRATGTVIEAKLDKGRGPVATLLVQSGTLRVGDPIVVGYTYGRVRAMTNDLGRRVKEAGPSTPVEITGLNEVPQAGDRFMVFEDEKKARQIGEARAQKQIVQQRSVKARVSLDDLFEKIKQGEMKELNIIVKADVQGSVEALVAALQKIEVEGVRVKIIHSGVGAVTEYDIMLASASNAIVIGFNVRPDANAKRVAEAEKVDIRLHRIIYKVIEEIEAAMKGMLDPEYEEKVIGQAEVRQTFKVSKVGTIAGCYVTDGKITRDSSVRLIRQGIVVYEGQIDTLKRYKDDVKEVAQGYECGITIKNFNDIKEGDVIEAYVMQEVARK.

The segment at 112-138 is disordered; sequence KIFNNKKNKKQKPQQAPQQEVQKKKEK. Residues 114–123 show a composition bias toward basic residues; the sequence is FNNKKNKKQK. One can recognise a tr-type G domain in the interval 224 to 393; sequence ERPPVVTIMG…LLVSEMEELK (170 aa). The tract at residues 233–240 is G1; the sequence is GHVDHGKT. 233 to 240 lines the GTP pocket; that stretch reads GHVDHGKT. The segment at 258-262 is G2; the sequence is GITQH. The G3 stretch occupies residues 279–282; sequence DTPG. GTP contacts are provided by residues 279–283 and 333–336; these read DTPGH and NKID. The interval 333–336 is G4; sequence NKID. A G5 region spans residues 369 to 371; that stretch reads SAL.

Belongs to the TRAFAC class translation factor GTPase superfamily. Classic translation factor GTPase family. IF-2 subfamily.

The protein resides in the cytoplasm. One of the essential components for the initiation of protein synthesis. Protects formylmethionyl-tRNA from spontaneous hydrolysis and promotes its binding to the 30S ribosomal subunits. Also involved in the hydrolysis of GTP during the formation of the 70S ribosomal complex. This chain is Translation initiation factor IF-2, found in Anoxybacillus flavithermus (strain DSM 21510 / WK1).